Here is a 217-residue protein sequence, read N- to C-terminus: Mucosal pentraxin (217 aa).

Residues 1-19 (MEKLLLGVLLLAFLPEGMT) form the signal peptide. The region spanning 24 to 217 (RGKVFIFPEQ…KGYVVVKPKL (194 aa)) is the Pentraxin (PTX) domain. A disulfide bond links cysteine 55 and cysteine 114. Ca(2+) is bound by residues aspartate 77, asparagine 78, glutamate 155, glutamine 156, aspartate 157, and glutamine 167.

It belongs to the pentraxin family. Homopentamer. Pentraxin (or pentaxin) have a discoid arrangement of 5 non-covalently bound subunits. Ca(2+) is required as a cofactor.

It localises to the secreted. The chain is Mucosal pentraxin (MPTX) from Bos taurus (Bovine).